The primary structure comprises 100 residues: Putative septation protein SpoVG (100 aa).

The protein belongs to the SpoVG family.

Its function is as follows. Could be involved in septation. This Clostridium novyi (strain NT) protein is Putative septation protein SpoVG.